Reading from the N-terminus, the 171-residue chain is uncharacterized protein (171 aa).

Residues 123–171 (CTKRDLRNDPPPAYQPDDPLKDLRKNFEKKEKPTWNDVEKKKNGVFEFH) are disordered. Positions 140 to 171 (DPLKDLRKNFEKKEKPTWNDVEKKKNGVFEFH) are enriched in basic and acidic residues.

This is an uncharacterized protein from Caenorhabditis elegans.